The primary structure comprises 112 residues: Putative pterin-4-alpha-carbinolamine dehydratase (112 aa).

It belongs to the pterin-4-alpha-carbinolamine dehydratase family.

The enzyme catalyses (4aS,6R)-4a-hydroxy-L-erythro-5,6,7,8-tetrahydrobiopterin = (6R)-L-erythro-6,7-dihydrobiopterin + H2O. The polypeptide is Putative pterin-4-alpha-carbinolamine dehydratase (Shewanella amazonensis (strain ATCC BAA-1098 / SB2B)).